Consider the following 251-residue polypeptide: Zinc import ATP-binding protein ZnuC (251 aa).

The 216-residue stretch at 5-220 (VSLENVSVSF…PEFISMFGPR (216 aa)) folds into the ABC transporter domain. Residue 37–44 (GPNGAGKS) coordinates ATP.

Belongs to the ABC transporter superfamily. Zinc importer (TC 3.A.1.15.5) family. In terms of assembly, the complex is composed of two ATP-binding proteins (ZnuC), two transmembrane proteins (ZnuB) and a solute-binding protein (ZnuA).

It is found in the cell inner membrane. The enzyme catalyses Zn(2+)(out) + ATP(in) + H2O(in) = Zn(2+)(in) + ADP(in) + phosphate(in) + H(+)(in). Functionally, part of the ABC transporter complex ZnuABC involved in zinc import. Responsible for energy coupling to the transport system. In Salmonella choleraesuis (strain SC-B67), this protein is Zinc import ATP-binding protein ZnuC.